A 259-amino-acid polypeptide reads, in one-letter code: 3-deoxy-manno-octulosonate cytidylyltransferase (259 aa).

Belongs to the KdsB family.

It is found in the cytoplasm. It carries out the reaction 3-deoxy-alpha-D-manno-oct-2-ulosonate + CTP = CMP-3-deoxy-beta-D-manno-octulosonate + diphosphate. It participates in nucleotide-sugar biosynthesis; CMP-3-deoxy-D-manno-octulosonate biosynthesis; CMP-3-deoxy-D-manno-octulosonate from 3-deoxy-D-manno-octulosonate and CTP: step 1/1. It functions in the pathway bacterial outer membrane biogenesis; lipopolysaccharide biosynthesis. Activates KDO (a required 8-carbon sugar) for incorporation into bacterial lipopolysaccharide in Gram-negative bacteria. The protein is 3-deoxy-manno-octulosonate cytidylyltransferase of Xanthomonas oryzae pv. oryzae (strain KACC10331 / KXO85).